Consider the following 172-residue polypeptide: NADH-quinone oxidoreductase subunit B (172 aa).

Residues Cys46, Cys47, Cys111, and Cys141 each coordinate [4Fe-4S] cluster.

The protein belongs to the complex I 20 kDa subunit family. NDH-1 is composed of 14 different subunits. Subunits NuoB, C, D, E, F, and G constitute the peripheral sector of the complex. [4Fe-4S] cluster serves as cofactor.

The protein localises to the cell membrane. The enzyme catalyses a quinone + NADH + 5 H(+)(in) = a quinol + NAD(+) + 4 H(+)(out). In terms of biological role, NDH-1 shuttles electrons from NADH, via FMN and iron-sulfur (Fe-S) centers, to quinones in the respiratory chain. The immediate electron acceptor for the enzyme in this species is believed to be a menaquinone. Couples the redox reaction to proton translocation (for every two electrons transferred, four hydrogen ions are translocated across the cytoplasmic membrane), and thus conserves the redox energy in a proton gradient. This Bacillus cereus (strain G9842) protein is NADH-quinone oxidoreductase subunit B.